Consider the following 309-residue polypeptide: Taste receptor type 2 member 43 (309 aa).

Residue Met-1 is a topological domain, extracellular. Residues 2-22 traverse the membrane as a helical segment; it reads ITFLPIIFSSLVVVTFVIGNF. Residues 23–46 are Cytoplasmic-facing; that stretch reads ANGFIALVNSIEWFKRQKISFADQ. The chain crosses the membrane as a helical span at residues 47–67; that stretch reads ILTALAVSRVGLLWVLLLNWY. The Extracellular segment spans residues 68–86; the sequence is LTVLNPAFNSVEVRTTAYN. A helical transmembrane segment spans residues 87 to 107; the sequence is IWAVINHFSNWLATSLSIFYL. The Cytoplasmic portion of the chain corresponds to 108 to 126; it reads LKIANFSNFIFLHLKRRVK. Residues 127–147 form a helical membrane-spanning segment; it reads SVILVMLLGPLLFLACHLFMI. Over 148–178 the chain is Extracellular; that stretch reads NMNEIVRTKEFDGNMTWKIKLKSAMYFSNMT. N-linked (GlcNAc...) asparagine glycosylation is found at Asn-161 and Asn-176. The helical transmembrane segment at 179-199 threads the bilayer; it reads VTMVANLVPFTLTLLSFLLLI. Residues 200–229 are Cytoplasmic-facing; it reads CSLCKHLKKMQLHGKGSQDPSTKVHIKALQ. Residues 230–250 form a helical membrane-spanning segment; it reads TVISFLLLCAIYFLSIMISVW. The Extracellular segment spans residues 251–259; that stretch reads SFGSLENKP. Residues 260–280 traverse the membrane as a helical segment; the sequence is VFMFCKAIRFSYPSIHPFILI. At 281 to 309 the chain is on the cytoplasmic side; the sequence is WGNKKLKQTFLSVFWQMRYWVKGEKTSSP.

Belongs to the G-protein coupled receptor T2R family.

It localises to the membrane. It is found in the cell projection. The protein localises to the cilium membrane. Functionally, gustducin-coupled receptor immplicated in the perception of bitter compounds in the oral cavity and the gastrointestinal tract. Signals through PLCB2 and the calcium-regulated cation channel TRPM5. Activated by the sulfonyl amide sweeteners saccharin and acesulfame K. In airway epithelial cells, binding of bitter compounds increases the intracellular calcium ion concentration and stimulates ciliary beat frequency. May act as chemosensory receptors in airway epithelial cells to detect and eliminate potential noxious agents from the airways. The chain is Taste receptor type 2 member 43 (TAS2R43) from Pan paniscus (Pygmy chimpanzee).